A 328-amino-acid polypeptide reads, in one-letter code: Lactamase-like protein nscB (328 aa).

The Zn(2+) site is built by His-97, His-99, Asp-101, and His-102. Asp-101 serves as the catalytic Proton donor/acceptor.

This sequence belongs to the metallo-beta-lactamase superfamily. The cofactor is Zn(2+).

The protein operates within secondary metabolite biosynthesis. In terms of biological role, lactamase-like protein; part of the gene cluster that mediates the biosynthesis of neosartoricin, a prenylated anthracenone that exhibits T-cell antiproliferative activity, suggestive of a physiological role as an immunosuppressive agent. The non-reducing polyketide synthase nscA probably synthesizes and cyclizes the decaketide backbone. The hydrolase nscB then mediates the product release through hydrolysis followed by spontaneous decarboxylation. The prenyltransferase nscD catalyzes the addition of the dimethylallyl group to the aromatic C5. The FAD-dependent monooxygenase nscC is then responsible for the stereospecific hydroxylation at C2. There is no gene encoding O-acetyltransferase in the nsc gene cluster; thus, the last step of 2-O-acetylation leading to neosartoricin may be catalyzed by an unidentified O-acetyltransferase. The protein is Lactamase-like protein nscB of Neosartorya fischeri (strain ATCC 1020 / DSM 3700 / CBS 544.65 / FGSC A1164 / JCM 1740 / NRRL 181 / WB 181) (Aspergillus fischerianus).